A 132-amino-acid polypeptide reads, in one-letter code: Large ribosomal subunit protein uL22c (132 aa).

The protein belongs to the universal ribosomal protein uL22 family. Part of the 50S ribosomal subunit.

Its subcellular location is the plastid. It is found in the chloroplast. Functionally, this protein binds specifically to 23S rRNA. In terms of biological role, the globular domain of the protein is located near the polypeptide exit tunnel on the outside of the subunit, while an extended beta-hairpin is found that lines the wall of the exit tunnel in the center of the 70S ribosome. In Populus alba (White poplar), this protein is Large ribosomal subunit protein uL22c (rpl22).